A 3961-amino-acid polypeptide reads, in one-letter code: Replicase polyprotein 1ab (3961 aa).

Residues 8 to 28 (CTCTPNARVFVAEGQVYCTRC) form a C4-type; atypical zinc finger. The 112-residue stretch at 69–180 (ECSPAGACWL…EDFCPFECAM (112 aa)) folds into the Peptidase C31 domain. The PCP1-alpha stretch occupies residues 69 to 182 (ECSPAGACWL…FCPFECAMAT (114 aa)). Residues C76 and H146 each act as for Nsp1-alpha papain-like cysteine proteinase activity in the active site. Residues 199 to 200 (IS) form an important for host EIF2AK2 inhibition region. Residues 263–382 (DTVPEGNCWW…IFRFGSHKWY (120 aa)) form a PCP1-beta region. A Peptidase C32 domain is found at 263–383 (DTVPEGNCWW…FRFGSHKWYG (121 aa)). Catalysis depends on for Nsp1-beta papain-like cysteine proteinase activity residues C270 and H339. The OTU-like stretch occupies residues 426 to 513 (LKHYSPPAEG…GEHWTVTVTP (88 aa)). Residues 428–535 (HYSPPAEGNC…QGCCEHKGGL (108 aa)) enclose the Peptidase C33 domain. Active-site for Nsp2 cysteine proteinase activity residues include C437 and H506. 3 disordered regions span residues 809-862 (RWTP…NSWE), 898-979 (ATPL…GVLG), and 1153-1213 (NQEP…GGGP). A compositionally biased stretch (pro residues) spans 810-819 (WTPPPPPPKV). 8 helical membrane passes run 1266 to 1286 (LCLF…LGVF), 1296 to 1316 (GVFG…SDPV), 1345 to 1365 (SLVV…LGGA), 1368 to 1388 (IWHF…GAYV), 1583 to 1603 (LMAA…GIYV), 1650 to 1670 (ALVA…FVSI), 1685 to 1705 (CILL…LCVF), and 1719 to 1739 (ILWL…LAMV). The tract at residues 1266 to 1388 (LCLFLCYSYP…ADCILAGAYV (123 aa)) is HD1. The HD2 stretch occupies residues 1583–1745 (LMAALHVACS…LAMVLLVSLW (163 aa)). In terms of domain architecture, Peptidase S32 spans 1810 to 2013 (GAFRTRKPSL…ALLAAKPELE (204 aa)). Residues H1848, D1873, and S1927 each act as charge relay system; for 3C-like serine proteinase activity in the active site. Helical transmembrane passes span 2012 to 2032 (LEGG…WRMM), 2060 to 2080 (FSFG…ILMI), 2092 to 2112 (WSLA…LAAT), 2137 to 2157 (SPVP…LYLF), and 2164 to 2184 (QILV…FAEG). The interval 2036-2157 (WTPLVAVSFF…HLLAIILYLF (122 aa)) is HD3. Residues 2329–2358 (PTPTPPPAPVPIPLPPKVLENGPNAWGDED) are disordered. The segment covering 2330–2344 (TPTPPPAPVPIPLPP) has biased composition (pro residues). The NiRAN domain occupies 2488-2651 (IIDKLQGLTK…LPYKLYPVRG (164 aa)). In terms of domain architecture, RdRp catalytic spans 2890 to 3024 (GRCLEADLAS…YAESPTMPNY (135 aa)). Residues 3145 to 3208 (GKKSRVCGYC…SPVGKGTSPL (64 aa)) enclose the AV ZBD domain. Residues C3151, C3154, C3164, C3169, H3172, H3174, H3176, H3178, C3185, H3187, C3194, and C3197 each coordinate Zn(2+). One can recognise a (+)RNA virus helicase ATP-binding domain in the interval 3265-3417 (ASTALLPTCK…VFDIMPQTQL (153 aa)). Residue 3298–3305 (GKTYWLLQ) participates in ATP binding. The (+)RNA virus helicase C-terminal domain maps to 3418-3546 (KTIWRFGQNI…AVHRDGQLIV (129 aa)). An AV-Nsp11N/CoV-Nsp15M domain is found at 3585 to 3681 (EGSSSPLPKV…LTKFVKGEAQ (97 aa)). The NendoU domain maps to 3683–3805 (LPETVFSTGR…MVWRDKTAYF (123 aa)). Residues H3714, H3729, and K3758 contribute to the active site.

It belongs to the arteriviridae polyprotein family. Nsp1-alpha papain-like: Interacts with host RNF31. In terms of assembly, interacts with host EIF2AK2; this interaction occurs in host stress granules and leads to EIF2AK2 inhibition. Interacts with host G3BP1; this interaction probably plays a role in Nsp1-beta-mediated inhibition of host EIF2AK2. As to quaternary structure, interacts with host DDX18; this interaction redistributes host DDX18 to the cytoplasm. Interacts with host IFITM1. In terms of assembly, interacts with host DDX5. As to quaternary structure, interacts with host OTULIN. Interacts with host LGALS3. Post-translationally, specific enzymatic cleavages in vivo by its own proteases yield mature proteins. Nsp1 is autocleaved into two subunits, Nsp1-alpha and Nsp1-beta. There are two alternative pathways for processing. Either nsp4-5 is cleaved, which represents the major pathway or the nsp5-6 and nsp6-7 are processed, which represents the minor pathway. The major pathway occurs when nsp2 acts as a cofactor for nsp4.

The protein localises to the host nucleus. The protein resides in the host cytoplasm. Its subcellular location is the host membrane. It is found in the host endoplasmic reticulum. It localises to the host perinuclear region. The enzyme catalyses RNA(n) + a ribonucleoside 5'-triphosphate = RNA(n+1) + diphosphate. It carries out the reaction ATP + H2O = ADP + phosphate + H(+). The catalysed reaction is Thiol-dependent hydrolysis of ester, thioester, amide, peptide and isopeptide bonds formed by the C-terminal Gly of ubiquitin (a 76-residue protein attached to proteins as an intracellular targeting signal).. It catalyses the reaction uridylyl-uridylyl-ribonucleotide-RNA = a 3'-end uridylyl-2',3'-cyclophospho-uridine-RNA + a 5'-end dephospho-ribonucleoside-RNA. Functionally, contains the activities necessary for the transcription of negative stranded RNA, leader RNA, subgenomic mRNAs and progeny virion RNA as well as proteinases responsible for the cleavage of the polyprotein into functional products. Inhibits host IFN-beta production. Plays a role in the degradation of the host transcriptional activator CREBBP protein. The degradation of host CREBBP which is a key component of the IFN enhanceosome is likely responsible for the inhibition of interferon mediated by Nsp1-alpha. Also participates in the inhibition of host NF-kappa-B activation by counteracting LUBAC-dependent induction of NF-kappa-B. Reduces host NEMO ubiquitination by blocking the interaction between the two LUBAC complex components RNF31 and SHARPIN. In terms of biological role, plays a role in blocking host mRNA nuclear export to the cytoplasm and subversion of host protein synthesis. Additionally, inhibits the interferon-activated JAK/STAT signal transduction by mediating the ubiquitination and subsequent proteasomal degradation of host KPNA1. Repurposes the host antiviral stress granules into a proviral platform to counteract the EIF2AK2/PKR restriction, thereby regulating the host inflammatory response. Its function is as follows. Multifunctional protein that acts as a viral protease and as a viral antagonist of host immune response. Cleaves the nsp2/nsp3 site in the viral polyprotein. Displays deubiquitinating activity that cleaves both ubiquitinated and ISGylated products and therefore inhibits ubiquitin and ISG15-dependent host innate immunity. Also deubiquinates host NFKBIA, thereby interfering with NFKBIA degradation and impairing subsequent NF-kappa-B activation. Functionally, plays a role in the inhibition of the immune response by interacting with host IFITM1. This interaction leads to the proteasomal degradation of the IFN-induced antiviral protein IFITM1. Cleaves the majority of cleavage sites present in the C-terminus of the polyprotein. Triggers host apoptosis through caspase-3, -8, and -9 activations. Subverts host innate immune responses through its protease activity. Targets the NF-kappa-B essential modulator NEMO and mediates its cleavage. Blocks host interferon beta induction and downstream signaling by cleaving mitochondrial MAVS, dislodging it from the mitochondria. Impairs host defense by cleaving host mRNA-decapping enzyme DCP1A to attenuate its antiviral activity. In terms of biological role, plays a role in the initial induction of autophagosomes from host endoplasmic reticulum. Its function is as follows. Plays a role in the inhibition of host STAT3 signaling pathway by inducing the degradation of STAT3. Functionally, responsible for replication and transcription of the viral RNA genome. Displays RNA and DNA duplex-unwinding activities with 5' to 3' polarity. In terms of biological role, plays a role in viral transcription/replication and prevents the simultaneous activation of host cell dsRNA sensors, such as MDA5/IFIH1, OAS, PKR and NLRP3 inflammasome. Acts by degrading the 5'-polyuridines generated during replication of the poly(A) region of viral genomic and subgenomic RNAs. Catalyzes a two-step reaction in which a 2'3'-cyclic phosphate (2'3'-cP) is first generated by 2'-O transesterification, which is then hydrolyzed to a 3'-phosphate (3'-P). If not degraded, poly(U) RNA would hybridize with poly(A) RNA tails and activate host dsRNA sensors. Also plays a role in the inhibition of host type I interferon production by recruiting host OTULIN to promote removal of linear ubiquitination targeting host NEMO. The chain is Replicase polyprotein 1ab (rep) from Porcine reproductive and respiratory syndrome virus (strain 16244B) (PRRSV).